Reading from the N-terminus, the 492-residue chain is MAPVGVEKKLLLGPNGPAVAAAGDLTSEEEEGQSLWSSILSEVSTRARSKLPSGKNILVFGEDGSGKTTLMTKLQGAEHGKKGRGLEYLYLSVHDEDRDDHTRCNVWILDGDLYHKGLLKFAVSAESLRETLVIFVADMSRPWTIMESLQKWASVLREHIDKMKIPPEEMRDLERKFMKEFQDYIEPEEGCQGSPQRRGPLTSGSDEDSVALPLGDNVLTHNLGIPVLVVCTKCDAMSVLEKEHDYRDEHLDFIQAHLRRFCLQYGAALIYTSVKEEKNLDLLYKYIVHKTYGFHFTIPALVVEKDAVFIPAGWDNEKKIAILHENFTTVKPEDAYEDFIVKPPVRKLVHDKELAAEDEQVFLMKQQSLLAKQPATPTRTSESPARGPSGSPRTQGRGGPASVPSASPGTSVKKPDPNIKNNAASEGVLASFFNSLLSKKTGSPGSPSAGGVQSTAKKSGQKTVLSNVQEELDRMTRKPDSMVTNSSTENEA.

ATP is bound at residue 61–68 (GEDGSGKT). 3 disordered regions span residues 188–207 (EEGC…GSDE), 370–423 (LAKQ…KNNA), and 437–492 (LSKK…ENEA). Residues S194, S383, and S391 each carry the phosphoserine modification. Positions 370–383 (LAKQPATPTRTSES) are enriched in polar residues. Residue R397 is modified to Omega-N-methylarginine. The span at 437 to 469 (LSKKTGSPGSPSAGGVQSTAKKSGQKTVLSNVQ) shows a compositional bias: polar residues. At T441 the chain carries Phosphothreonine. Phosphoserine is present on residues S443 and S446. The segment covering 471–480 (ELDRMTRKPD) has biased composition (basic and acidic residues). Residues 482-492 (MVTNSSTENEA) show a composition bias toward polar residues.

The protein belongs to the dynein light intermediate chain family. Homodimer. The cytoplasmic dynein 1 complex consists of two catalytic heavy chains (HCs) and a number of non-catalytic subunits presented by intermediate chains (ICs), light intermediate chains (LICs) and light chains (LCs); the composition seems to vary in respect to the IC, LIC and LC composition. The heavy chain homodimer serves as a scaffold for the probable homodimeric assembly of the respective non-catalytic subunits. The ICs and LICs bind directly to the HC dimer and the LCs assemble on the IC dimer. Interacts with DYNC1H1; DYNC1LI1 and DYNC1LI2 bind mutually exclusive to DYNC1H.

Its subcellular location is the cytoplasm. It localises to the cytoskeleton. Functionally, acts as one of several non-catalytic accessory components of the cytoplasmic dynein 1 complex that are thought to be involved in linking dynein to cargos and to adapter proteins that regulate dynein function. Cytoplasmic dynein 1 acts as a motor for the intracellular retrograde motility of vesicles and organelles along microtubules. May play a role in binding dynein to membranous organelles or chromosomes. This Mus musculus (Mouse) protein is Cytoplasmic dynein 1 light intermediate chain 2 (Dync1li2).